The sequence spans 395 residues: Synaptotagmin-8 (395 aa).

Residues 1–44 (MQADRSMKMGHVSNPLSTSAPVDATAGPNLIPDLITKIPWPRWI) are Extracellular-facing. A helical; Signal-anchor for type III membrane protein membrane pass occupies residues 45–65 (LFIAILAAGVLLVSCLLCVIC). Topologically, residues 66–395 (YCCHRQRHRK…PRLPLLRPRS (330 aa)) are cytoplasmic. C2 domains follow at residues 113 to 229 (PWGQ…ESWY) and 241 to 370 (QMGE…AQWH).

This sequence belongs to the synaptotagmin family. In terms of assembly, homodimer or homooligomer. Homodimerization and homooligomerization do not depend on Ca(2+). Interacts with SYNCRIP isoform 2 C-terminus. Binds inositol 1,3,4,5-tetrakisphosphate (IP4). Binds to AP2 in a Ca(2+)-independent manner. Interacts with STX1A, STX1B and STX2; the interaction is Ca(2+)-dependent. In terms of tissue distribution, ubiquitous. Strongly expressed in heart, kidney, cerebral cortex, pancreas, and many insulin-secreting cells; lower expression in spleen. Broadly distributed in kidney.

The protein localises to the cell membrane. It is found in the cytoplasmic vesicle. Its subcellular location is the secretory vesicle. The protein resides in the acrosome. Functionally, involved in the trafficking and exocytosis of secretory vesicles in non-neuronal tissues. Mediates Ca(2+)-regulation of exocytosis acrosomal reaction in sperm. May mediate Ca(2+)-regulation of exocytosis in insulin secreted cells. This Rattus norvegicus (Rat) protein is Synaptotagmin-8 (Syt8).